A 172-amino-acid polypeptide reads, in one-letter code: uncharacterized protein (172 aa).

Positions 21–75 (FKRILLELGLTLKEFSEISGIPYSTLYKVIQGKDFRVSTLIKILKTIRSFEKDEN) constitute an HTH cro/C1-type domain. Residues 32-51 (LKEFSEISGIPYSTLYKVIQ) constitute a DNA-binding region (H-T-H motif).

This is an uncharacterized protein from Methanocaldococcus jannaschii (strain ATCC 43067 / DSM 2661 / JAL-1 / JCM 10045 / NBRC 100440) (Methanococcus jannaschii).